We begin with the raw amino-acid sequence, 180 residues long: Large ribosomal subunit protein uL5 (180 aa).

Belongs to the universal ribosomal protein uL5 family. As to quaternary structure, part of the 50S ribosomal subunit; part of the 5S rRNA/L5/L18/L25 subcomplex. Contacts the 5S rRNA and the P site tRNA. Forms a bridge to the 30S subunit in the 70S ribosome.

This is one of the proteins that bind and probably mediate the attachment of the 5S RNA into the large ribosomal subunit, where it forms part of the central protuberance. In the 70S ribosome it contacts protein S13 of the 30S subunit (bridge B1b), connecting the 2 subunits; this bridge is implicated in subunit movement. Contacts the P site tRNA; the 5S rRNA and some of its associated proteins might help stabilize positioning of ribosome-bound tRNAs. This is Large ribosomal subunit protein uL5 from Spiroplasma kunkelii.